The sequence spans 227 residues: Cytochrome c oxidase subunit 2 (227 aa).

Residues 1-14 (MAYPLQLGFQDATS) are Mitochondrial intermembrane-facing. Residues 15–45 (PVMEELLHFHDHTLMIIFLISSLVLYIIMLM) form a helical membrane-spanning segment. At 46–59 (LTTKLVHTNMMNVQ) the chain is on the mitochondrial matrix side. Residues 60-87 (EMEMIWTILPAIILILIALPSLHTLYMM) form a helical membrane-spanning segment. Topologically, residues 88–227 (DEINNPLLTI…YFESWSASLA (140 aa)) are mitochondrial intermembrane. Cu cation-binding residues include H161, C196, E198, C200, H204, and M207. E198 is a binding site for Mg(2+). The residue at position 218 (Y218) is a Phosphotyrosine.

It belongs to the cytochrome c oxidase subunit 2 family. Component of the cytochrome c oxidase (complex IV, CIV), a multisubunit enzyme composed of 14 subunits. The complex is composed of a catalytic core of 3 subunits MT-CO1, MT-CO2 and MT-CO3, encoded in the mitochondrial DNA, and 11 supernumerary subunits COX4I, COX5A, COX5B, COX6A, COX6B, COX6C, COX7A, COX7B, COX7C, COX8 and NDUFA4, which are encoded in the nuclear genome. The complex exists as a monomer or a dimer and forms supercomplexes (SCs) in the inner mitochondrial membrane with NADH-ubiquinone oxidoreductase (complex I, CI) and ubiquinol-cytochrome c oxidoreductase (cytochrome b-c1 complex, complex III, CIII), resulting in different assemblies (supercomplex SCI(1)III(2)IV(1) and megacomplex MCI(2)III(2)IV(2)). Found in a complex with TMEM177, COA6, COX18, COX20, SCO1 and SCO2. Interacts with TMEM177 in a COX20-dependent manner. Interacts with COX20. Interacts with COX16. Requires Cu cation as cofactor.

The protein resides in the mitochondrion inner membrane. The enzyme catalyses 4 Fe(II)-[cytochrome c] + O2 + 8 H(+)(in) = 4 Fe(III)-[cytochrome c] + 2 H2O + 4 H(+)(out). Functionally, component of the cytochrome c oxidase, the last enzyme in the mitochondrial electron transport chain which drives oxidative phosphorylation. The respiratory chain contains 3 multisubunit complexes succinate dehydrogenase (complex II, CII), ubiquinol-cytochrome c oxidoreductase (cytochrome b-c1 complex, complex III, CIII) and cytochrome c oxidase (complex IV, CIV), that cooperate to transfer electrons derived from NADH and succinate to molecular oxygen, creating an electrochemical gradient over the inner membrane that drives transmembrane transport and the ATP synthase. Cytochrome c oxidase is the component of the respiratory chain that catalyzes the reduction of oxygen to water. Electrons originating from reduced cytochrome c in the intermembrane space (IMS) are transferred via the dinuclear copper A center (CU(A)) of subunit 2 and heme A of subunit 1 to the active site in subunit 1, a binuclear center (BNC) formed by heme A3 and copper B (CU(B)). The BNC reduces molecular oxygen to 2 water molecules using 4 electrons from cytochrome c in the IMS and 4 protons from the mitochondrial matrix. This chain is Cytochrome c oxidase subunit 2 (MT-CO2), found in Mammuthus primigenius (Siberian woolly mammoth).